The chain runs to 94 residues: Conotoxin Im026 (94 aa).

An N-terminal signal peptide occupies residues 1–24 (MRLTTMHSVILMLLLVFAFDNVDG). Positions 25–59 (DEPGQTARDVDNRNFMSILRSEGKPVHFLRAIKKR) are excised as a propeptide.

Post-translationally, contains 4 disulfide bonds. Expressed by the venom duct.

It localises to the secreted. Functionally, probable neurotoxin. The sequence is that of Conotoxin Im026 from Conus imperialis (Imperial cone).